We begin with the raw amino-acid sequence, 54 residues long: MTEKKQQNKPNENPEHNDLTDPIPNEELKENMNDEKHKRQQRDNSQSERDYDTK.

Basic and acidic residues-rich tracts occupy residues 1 to 19 and 26 to 54; these read MTEK…HNDL and EELK…YDTK. Positions 1–54 are disordered; that stretch reads MTEKKQQNKPNENPEHNDLTDPIPNEELKENMNDEKHKRQQRDNSQSERDYDTK.

This is an uncharacterized protein from Bacillus subtilis (strain 168).